A 675-amino-acid polypeptide reads, in one-letter code: Glycerophosphocholine phosphodiesterase GPCPD1 (675 aa).

Positions 1–115 (MTPSQVTFEI…IIIDDGQFGI (115 aa)) constitute a CBM20 domain. Residues Arg-70 and 88-89 (HK) each bind substrate. Residues Ser-178 and Ser-427 each carry the phosphoserine modification. Residues 321-621 (PLDVGHRGAG…DRIYDWMPEQ (301 aa)) form the GP-PDE domain. Phosphotyrosine is present on Tyr-611.

This sequence belongs to the glycerophosphoryl diester phosphodiesterase family. In terms of tissue distribution, widely expressed with highest levels in skeletal muscle and heart.

Its subcellular location is the cytoplasm. It localises to the cytosol. It carries out the reaction sn-glycerol 3-phosphocholine + H2O = sn-glycerol 3-phosphate + choline + H(+). In terms of biological role, may be involved in the negative regulation of skeletal muscle differentiation, independently of its glycerophosphocholine phosphodiesterase activity. The sequence is that of Glycerophosphocholine phosphodiesterase GPCPD1 (Gpcpd1) from Mus musculus (Mouse).